A 130-amino-acid chain; its full sequence is Universal stress protein MSMEG_4207 (130 aa).

Lys104 carries the post-translational modification N6-acetyllysine.

Belongs to the universal stress protein A family. Acetylated on Lys-104 by PatA in the presence of acetyl-CoA as an acetyl donor.

The polypeptide is Universal stress protein MSMEG_4207 (Mycolicibacterium smegmatis (strain ATCC 700084 / mc(2)155) (Mycobacterium smegmatis)).